Consider the following 300-residue polypeptide: GTPase Era (300 aa).

Residues 8–176 form the Era-type G domain; it reads RCGYVAIVGR…ESLIASHLPE (169 aa). The segment at 16–23 is G1; the sequence is GRPNVGKS. 16-23 contributes to the GTP binding site; it reads GRPNVGKS. The segment at 42-46 is G2; it reads QTTRH. The interval 63–66 is G3; sequence DTPG. GTP is bound by residues 63–67 and 125–128; these read DTPGM and NKTD. The segment at 125–128 is G4; sequence NKTD. Residues 155–157 form a G5 region; sequence ISA. Residues 199–283 form the KH type-2 domain; sequence VREKIMRQLG…MLNLWVKVKG (85 aa).

Belongs to the TRAFAC class TrmE-Era-EngA-EngB-Septin-like GTPase superfamily. Era GTPase family. In terms of assembly, monomer.

Its subcellular location is the cytoplasm. It localises to the cell inner membrane. An essential GTPase that binds both GDP and GTP, with rapid nucleotide exchange. Plays a role in 16S rRNA processing and 30S ribosomal subunit biogenesis and possibly also in cell cycle regulation and energy metabolism. This is GTPase Era from Pseudomonas savastanoi pv. phaseolicola (strain 1448A / Race 6) (Pseudomonas syringae pv. phaseolicola (strain 1448A / Race 6)).